The primary structure comprises 131 residues: Holo-[acyl-carrier-protein] synthase (131 aa).

2 residues coordinate Mg(2+): aspartate 8 and glutamate 59.

It belongs to the P-Pant transferase superfamily. AcpS family. It depends on Mg(2+) as a cofactor.

It is found in the cytoplasm. It catalyses the reaction apo-[ACP] + CoA = holo-[ACP] + adenosine 3',5'-bisphosphate + H(+). Transfers the 4'-phosphopantetheine moiety from coenzyme A to a Ser of acyl-carrier-protein. The polypeptide is Holo-[acyl-carrier-protein] synthase (Orientia tsutsugamushi (strain Boryong) (Rickettsia tsutsugamushi)).